A 323-amino-acid chain; its full sequence is MTRSALVTGITGQDGAYLAKLLLEKGYRVHGLVARRSSDTRWRLRELGIEGDIQYEDGDMADACSVQRAVIKAQPQEVYNLAAQSFVGASWNQPVTTGVVDGLGVTHLLEAIRQFSPETRFYQASTSEMFGLIQAERQDENTPFYPRSPYGVAKLYGHWITVNYRESFGLHASSGILFNHESPLRGIEFVTRKVTDAVARIKLGKQQELRLGNVDAKRDWGFAGDYVEAMWLMLQQDKADDYVVATGVTTTVRDMCQIAFEHVGLDYRDFLKIDPAFFRPAEVDVLLGNPAKAQRVLGWKPRTSLDELIRMMVEADLRRVSRE.

NADP(+) contacts are provided by residues 11-14, arginine 36, 59-60, and 81-85; these read TGQD, DM, and LAAQS. Threonine 126 is a catalytic residue. Residues glutamate 128 and tyrosine 150 each act as nucleophile in the active site. 3 residues coordinate NADP(+): lysine 154, histidine 180, and arginine 185.

It belongs to the NAD(P)-dependent epimerase/dehydratase family. GDP-mannose 4,6-dehydratase subfamily. In terms of assembly, homotetramer. Requires NADP(+) as cofactor.

It catalyses the reaction GDP-alpha-D-mannose = GDP-4-dehydro-alpha-D-rhamnose + H2O. It functions in the pathway bacterial outer membrane biogenesis; lipopolysaccharide biosynthesis. In terms of biological role, catalyzes the conversion of GDP-D-mannose to GDP-4-dehydro-6-deoxy-D-mannose. In Pseudomonas aeruginosa (strain ATCC 15692 / DSM 22644 / CIP 104116 / JCM 14847 / LMG 12228 / 1C / PRS 101 / PAO1), this protein is GDP-mannose 4,6-dehydratase.